Reading from the N-terminus, the 376-residue chain is Cyclin-dependent kinase 9-B (376 aa).

One can recognise a Protein kinase domain in the interval 19–319 (YERLAKIGQG…SDEALNHDFF (301 aa)). ATP-binding positions include 25–33 (IGQGTFGEV) and K48. D153 (proton acceptor) is an active-site residue. The segment at 345 to 376 (PPRRRGGHMPQQPANQARNPAATNQSEFDRVF) is disordered. Over residues 354–369 (PQQPANQARNPAATNQ) the composition is skewed to low complexity.

The protein belongs to the protein kinase superfamily. CMGC Ser/Thr protein kinase family. CDC2/CDKX subfamily. As to quaternary structure, associates with cyclin-T to form P-TEFb.

Its subcellular location is the nucleus. The catalysed reaction is L-seryl-[protein] + ATP = O-phospho-L-seryl-[protein] + ADP + H(+). It catalyses the reaction L-threonyl-[protein] + ATP = O-phospho-L-threonyl-[protein] + ADP + H(+). The enzyme catalyses [DNA-directed RNA polymerase] + ATP = phospho-[DNA-directed RNA polymerase] + ADP + H(+). Functionally, member of the cyclin-dependent kinase pair (CDK9/cyclin-T) complex, also called positive transcription elongation factor B (P-TEFb), which is proposed to facilitate the transition from abortive to production elongation by phosphorylating the CTD (C-terminal domain) of the large subunit of RNA polymerase II (RNAP II) and SUPT5H. This chain is Cyclin-dependent kinase 9-B (cdk9-b), found in Xenopus laevis (African clawed frog).